Consider the following 298-residue polypeptide: N-acetylmuramic acid 6-phosphate etherase (298 aa).

Residues 55-218 form the SIS domain; that stretch reads AANRYKKGGR…STGVMIRQGK (164 aa). Glutamate 83 functions as the Proton donor in the catalytic mechanism. The active site involves glutamate 114.

It belongs to the GCKR-like family. MurNAc-6-P etherase subfamily. In terms of assembly, homodimer.

The catalysed reaction is N-acetyl-D-muramate 6-phosphate + H2O = N-acetyl-D-glucosamine 6-phosphate + (R)-lactate. Its pathway is amino-sugar metabolism; N-acetylmuramate degradation. Specifically catalyzes the cleavage of the D-lactyl ether substituent of MurNAc 6-phosphate, producing GlcNAc 6-phosphate and D-lactate. The sequence is that of N-acetylmuramic acid 6-phosphate etherase from Lactobacillus acidophilus (strain ATCC 700396 / NCK56 / N2 / NCFM).